The primary structure comprises 309 residues: Probable cell wall protein PGA50 (309 aa).

The first 17 residues, 1-17, serve as a signal peptide directing secretion; the sequence is MKLNLLLLLFIVELVAA. 5 N-linked (GlcNAc...) asparagine glycosylation sites follow: asparagine 67, asparagine 115, asparagine 248, asparagine 267, and asparagine 277. The tract at residues 241–281 is disordered; that stretch reads STTTFSSNGTSSGTTNGDTRAETKSSNSTQTSSSDKNSSQI. A lipid anchor (GPI-anchor amidated serine) is attached at serine 286. The propeptide at 287 to 309 is removed in mature form; sequence TGVANFVASFGMGTLLLFVLSLC.

This sequence belongs to the IHD1 family. In terms of processing, the GPI-anchor is attached to the protein in the endoplasmic reticulum and serves to target the protein to the cell surface. There, the glucosamine-inositol phospholipid moiety is cleaved off and the GPI-modified mannoprotein is covalently attached via its lipidless GPI glycan remnant to the 1,6-beta-glucan of the outer cell wall layer.

It localises to the secreted. The protein resides in the cell wall. The protein localises to the membrane. Functionally, probable GPI-anchored cell wall protein that may be involved in cell wall organization, hyphal growth, as well as in virulence. This is Probable cell wall protein PGA50 (PGA50) from Candida albicans (strain SC5314 / ATCC MYA-2876) (Yeast).